The sequence spans 610 residues: Dihydroxy-acid dehydratase (610 aa).

Residue Asp81 participates in Mg(2+) binding. Position 122 (Cys122) interacts with [2Fe-2S] cluster. Positions 123 and 124 each coordinate Mg(2+). Position 124 is an N6-carboxylysine (Lys124). Residue Cys196 coordinates [2Fe-2S] cluster. Mg(2+) is bound at residue Glu492. Ser518 (proton acceptor) is an active-site residue.

It belongs to the IlvD/Edd family. Homodimer. [2Fe-2S] cluster serves as cofactor. Requires Mg(2+) as cofactor.

It catalyses the reaction (2R)-2,3-dihydroxy-3-methylbutanoate = 3-methyl-2-oxobutanoate + H2O. The catalysed reaction is (2R,3R)-2,3-dihydroxy-3-methylpentanoate = (S)-3-methyl-2-oxopentanoate + H2O. Its pathway is amino-acid biosynthesis; L-isoleucine biosynthesis; L-isoleucine from 2-oxobutanoate: step 3/4. The protein operates within amino-acid biosynthesis; L-valine biosynthesis; L-valine from pyruvate: step 3/4. Functionally, functions in the biosynthesis of branched-chain amino acids. Catalyzes the dehydration of (2R,3R)-2,3-dihydroxy-3-methylpentanoate (2,3-dihydroxy-3-methylvalerate) into 2-oxo-3-methylpentanoate (2-oxo-3-methylvalerate) and of (2R)-2,3-dihydroxy-3-methylbutanoate (2,3-dihydroxyisovalerate) into 2-oxo-3-methylbutanoate (2-oxoisovalerate), the penultimate precursor to L-isoleucine and L-valine, respectively. This is Dihydroxy-acid dehydratase from Ruegeria pomeroyi (strain ATCC 700808 / DSM 15171 / DSS-3) (Silicibacter pomeroyi).